A 287-amino-acid chain; its full sequence is Elongation factor Ts (287 aa).

Positions 81–84 (TDFV) are involved in Mg(2+) ion dislocation from EF-Tu.

Belongs to the EF-Ts family.

It localises to the cytoplasm. Functionally, associates with the EF-Tu.GDP complex and induces the exchange of GDP to GTP. It remains bound to the aminoacyl-tRNA.EF-Tu.GTP complex up to the GTP hydrolysis stage on the ribosome. In Nitratidesulfovibrio vulgaris (strain ATCC 29579 / DSM 644 / CCUG 34227 / NCIMB 8303 / VKM B-1760 / Hildenborough) (Desulfovibrio vulgaris), this protein is Elongation factor Ts.